The primary structure comprises 256 residues: D-aminoacyl-tRNA deacylase (256 aa).

The protein belongs to the DtdA deacylase family. Monomer. Zn(2+) serves as cofactor.

It carries out the reaction a D-aminoacyl-tRNA + H2O = a tRNA + a D-alpha-amino acid + H(+). The catalysed reaction is glycyl-tRNA(Ala) + H2O = tRNA(Ala) + glycine + H(+). In terms of biological role, D-aminoacyl-tRNA deacylase with broad substrate specificity. By recycling D-aminoacyl-tRNA to D-amino acids and free tRNA molecules, this enzyme counteracts the toxicity associated with the formation of D-aminoacyl-tRNA entities in vivo. The chain is D-aminoacyl-tRNA deacylase from Thermoplasma acidophilum (strain ATCC 25905 / DSM 1728 / JCM 9062 / NBRC 15155 / AMRC-C165).